The sequence spans 902 residues: Proline-rich transmembrane protein 4 (902 aa).

An N-terminal signal peptide occupies residues 1 to 18; the sequence is MAGRSCLELGLFCWVLLA. 3 disordered regions span residues 72–92, 121–149, and 281–333; these read TETH…EEGD, TPWA…SQPR, and SPSS…LLDD. Polar residues-rich tracts occupy residues 122–136 and 281–302; these read PWAS…SRLS and SPSS…STSG. A run of 5 helical transmembrane segments spans residues 371–391, 393–413, 432–452, 468–488, and 501–521; these read AGAL…LLPW, CPPG…AGTT, LVWL…LGLA, LAAL…GSAV, and GLHA…SCWG. The residue at position 642 (Ser-642) is a Phosphoserine. Disordered regions lie at residues 701 to 723, 774 to 811, and 839 to 872; these read AGAN…DFRP, AGPS…SLCG, and PPRP…ASEL. The span at 704–717 shows a compositional bias: polar residues; sequence NPTQSTASSPSSDC. Residues 786–798 show a composition bias toward pro residues; that stretch reads SPAPPELPSPGAW. 2 stretches are compositionally biased toward low complexity: residues 799–811 and 843–854; these read PPGS…SLCG and SESSPSLPASGS.

It is found in the membrane. In Mus musculus (Mouse), this protein is Proline-rich transmembrane protein 4 (Prrt4).